Here is a 303-residue protein sequence, read N- to C-terminus: MTSRTEAVKAYLLDLQDRICSALETEDGGARFVEDAWVREAGGGGRTRVIGEGNVIEKGGVNFSHVFGSGLPPSASAHRPELAGRGFEALGVSLVIHPHNPHVPTSHANVRFFIAEKEGEEAVWWFGGGFDLTPYYGNEEDCIHWHRVAEQACAPFGADVYPRYKAWCDRYFHLKHRGEPRGIGGLFFDDLNEWDFDTCFAFIRAIGDAFVDAYLPIVQRRKNTPYTPQQREFQEYRRGRYVEFNLVYDRGTLFGLQSGGRTESILMSLPPQVRWGYDWKAAPGSEEARLTEYFLQDRDWLGQ.

Position 93 (S93) interacts with substrate. Residues H97 and H107 each coordinate a divalent metal cation. H107 acts as the Proton donor in catalysis. Residue 109 to 111 participates in substrate binding; sequence NVR. H146 and H176 together coordinate a divalent metal cation. The interval 241–276 is important for dimerization; the sequence is YVEFNLVYDRGTLFGLQSGGRTESILMSLPPQVRWG. Residue 259–261 coordinates substrate; it reads GGR.

The protein belongs to the aerobic coproporphyrinogen-III oxidase family. In terms of assembly, homodimer. A divalent metal cation is required as a cofactor.

It localises to the cytoplasm. The catalysed reaction is coproporphyrinogen III + O2 + 2 H(+) = protoporphyrinogen IX + 2 CO2 + 2 H2O. The protein operates within porphyrin-containing compound metabolism; protoporphyrin-IX biosynthesis; protoporphyrinogen-IX from coproporphyrinogen-III (O2 route): step 1/1. Functionally, involved in the heme biosynthesis. Catalyzes the aerobic oxidative decarboxylation of propionate groups of rings A and B of coproporphyrinogen-III to yield the vinyl groups in protoporphyrinogen-IX. The chain is Oxygen-dependent coproporphyrinogen-III oxidase from Pseudomonas putida (strain ATCC 47054 / DSM 6125 / CFBP 8728 / NCIMB 11950 / KT2440).